The chain runs to 88 residues: Exodeoxyribonuclease 7 small subunit (88 aa).

Residues 69–88 (ALAEEADPEDGASGADGGGA) are disordered.

The protein belongs to the XseB family. In terms of assembly, heterooligomer composed of large and small subunits.

It localises to the cytoplasm. The enzyme catalyses Exonucleolytic cleavage in either 5'- to 3'- or 3'- to 5'-direction to yield nucleoside 5'-phosphates.. In terms of biological role, bidirectionally degrades single-stranded DNA into large acid-insoluble oligonucleotides, which are then degraded further into small acid-soluble oligonucleotides. The protein is Exodeoxyribonuclease 7 small subunit of Streptomyces coelicolor (strain ATCC BAA-471 / A3(2) / M145).